We begin with the raw amino-acid sequence, 4568 residues long: Dynein heavy chain, cytoplasmic (4568 aa).

Residues 1–1826 form a stem region; the sequence is MDSGNESSII…VVKMANSQFF (1826 aa). 5 coiled-coil regions span residues 587–652, 814–844, 1241–1274, 1324–1340, and 1559–1591; these read QTRL…VLGK, KLAE…NVLK, QEAL…LDLS, RKIR…LKQL, and VNMQ…RERS. AAA stretches follow at residues 1827-2049, 2118-2394, 2498-2747, and 2842-3111; these read YGFE…VLVS, QQLS…PTPQ, EIES…WVRG, and GFYE…GHRV. Residues 1865-1872, 2163-2170, 2537-2544, and 2880-2887 contribute to the ATP site; these read GPAGTGKT, GSSGSGKT, GPPGSGKT, and GTAGAGKT. Coiled coils occupy residues 3132–3229, 3339–3432, and 3707–3739; these read EKRS…AQVE, ARAQ…RDRW, and NSVI…EVDA. The segment at 3132–3432 is stalk; sequence EKRSDLEEEK…SSLRSERDRW (301 aa). AAA regions lie at residues 3496–3725 and 3954–4169; these read LSTV…EVAQ and AHRV…TLDA. Residues 4359-4386 adopt a coiled-coil conformation; that stretch reads QLLKDIRRDLNEISAVCRAEKKQNNETR.

The protein belongs to the dynein heavy chain family. As to quaternary structure, consists of at least two heavy chains and a number of intermediate and light chains.

The protein resides in the cytoplasm. It is found in the cytoskeleton. Cytoplasmic dynein acts as a motor for the intracellular retrograde motility of vesicles and organelles along microtubules. Dynein has ATPase activity; the force-producing power stroke is thought to occur on release of ADP. May play a role in nuclear migration in hypodermal precursor cells. May be involved in the transport of synaptic vesicle components towards the axon of the DA motor neuron. This function may involve the regulation of dynein by pct-1 and/or cdk-5. Involved in the formation of synapses in the dorsal region during synaptic remodeling of DD motor neurons. Required for anterograde trafficking of dense-core vesicles in the DB motor neuron dendrites. Required for the formation of dendritic branches of PVD sensory neurons. May also play a role in GABAergic synaptic vesicle localization in the ventral nerve cord. May play a role in the pairing of homologous chromosomes during meiosis. This Caenorhabditis elegans protein is Dynein heavy chain, cytoplasmic.